We begin with the raw amino-acid sequence, 1347 residues long: Spermatogenesis-associated protein 31A5 (1347 aa).

The chain crosses the membrane as a helical span at residues 23–43 (PWVLDIFLTLVFALGFFFLLL). 7 disordered regions span residues 55 to 87 (PSPS…GREC), 106 to 233 (GPHL…RDST), 373 to 397 (EQDT…GPQK), 628 to 657 (DESP…KEAQ), 900 to 955 (RGIP…REAV), 1084 to 1161 (VHEE…PSVS), and 1313 to 1335 (KAVS…SHHH). Positions 60–82 (GKRKCPVGRRRRPRGRMKNHSLR) are enriched in basic residues. Over residues 165 to 178 (LASTPSPGPMTTSV) the composition is skewed to polar residues. The span at 198–211 (PEPPALFPHPPHTP) shows a compositional bias: pro residues. 2 stretches are compositionally biased toward polar residues: residues 631–651 (PGTS…STGE) and 927–948 (LTYS…SSKA). Basic and acidic residues-rich tracts occupy residues 1108–1127 (HKSE…RLEG) and 1137–1146 (RKTEDTHQDE).

This sequence belongs to the SPATA31 family.

Its subcellular location is the membrane. Its function is as follows. May play a role in spermatogenesis. The polypeptide is Spermatogenesis-associated protein 31A5 (SPATA31A5) (Homo sapiens (Human)).